The sequence spans 444 residues: CCA-adding enzyme (444 aa).

2 residues coordinate ATP: S57 and R60. Positions 57 and 60 each coordinate CTP. Mg(2+) contacts are provided by D69, D71, and D124. ATP contacts are provided by H147, K168, and Y177. Residues H147, K168, and Y177 each contribute to the CTP site.

The protein belongs to the tRNA nucleotidyltransferase/poly(A) polymerase family. Archaeal CCA-adding enzyme subfamily. In terms of assembly, homodimer. Mg(2+) is required as a cofactor.

It catalyses the reaction a tRNA precursor + 2 CTP + ATP = a tRNA with a 3' CCA end + 3 diphosphate. The enzyme catalyses a tRNA with a 3' CCA end + 2 CTP + ATP = a tRNA with a 3' CCACCA end + 3 diphosphate. Functionally, catalyzes the addition and repair of the essential 3'-terminal CCA sequence in tRNAs without using a nucleic acid template. Adds these three nucleotides in the order of C, C, and A to the tRNA nucleotide-73, using CTP and ATP as substrates and producing inorganic pyrophosphate. tRNA 3'-terminal CCA addition is required both for tRNA processing and repair. Also involved in tRNA surveillance by mediating tandem CCA addition to generate a CCACCA at the 3' terminus of unstable tRNAs. While stable tRNAs receive only 3'-terminal CCA, unstable tRNAs are marked with CCACCA and rapidly degraded. This chain is CCA-adding enzyme, found in Methanococcus maripaludis (strain DSM 14266 / JCM 13030 / NBRC 101832 / S2 / LL).